A 199-amino-acid chain; its full sequence is LexA repressor (199 aa).

The segment at residues I28–I47 is a DNA-binding region (H-T-H motif). Active-site for autocatalytic cleavage activity residues include S120 and K157.

This sequence belongs to the peptidase S24 family. As to quaternary structure, homodimer.

The catalysed reaction is Hydrolysis of Ala-|-Gly bond in repressor LexA.. Its function is as follows. Represses a number of genes involved in the response to DNA damage (SOS response), including recA and lexA. In the presence of single-stranded DNA, RecA interacts with LexA causing an autocatalytic cleavage which disrupts the DNA-binding part of LexA, leading to derepression of the SOS regulon and eventually DNA repair. This chain is LexA repressor, found in Thermosipho melanesiensis (strain DSM 12029 / CIP 104789 / BI429).